We begin with the raw amino-acid sequence, 126 residues long: Ribosome-binding factor A (126 aa).

Belongs to the RbfA family. Monomer. Binds 30S ribosomal subunits, but not 50S ribosomal subunits or 70S ribosomes.

Its subcellular location is the cytoplasm. In terms of biological role, one of several proteins that assist in the late maturation steps of the functional core of the 30S ribosomal subunit. Associates with free 30S ribosomal subunits (but not with 30S subunits that are part of 70S ribosomes or polysomes). Required for efficient processing of 16S rRNA. May interact with the 5'-terminal helix region of 16S rRNA. The sequence is that of Ribosome-binding factor A from Thermosynechococcus vestitus (strain NIES-2133 / IAM M-273 / BP-1).